A 70-amino-acid chain; its full sequence is Brevinin-ALb (70 aa).

Positions 1 to 22 (MFTLKKSLLLLFFLGTINLSLC) are cleaved as a signal peptide. A propeptide spanning residues 23-46 (EQERDADEEERRDDDEMDVEVEKR) is cleaved from the precursor. Cys-64 and Cys-70 are joined by a disulfide.

As to expression, expressed by the skin glands.

Its subcellular location is the secreted. In terms of biological role, antimicrobial peptide with activity against Gram-positive and Gram-negative bacteria and against fungi. Has been tested against S.aureus (MIC=5.5 ug/mL), E.coli (MIC=6.5 ug/mL), B.dysenteriae (MIC=2.2 ug/mL), and C.albicans (MIC=7.5 ug/mL). Can regulate or mediate antimicrobial response by stimulating mast cell degranulation. Induces histamine release. Shows cytotoxicity toward solid tumor cell line HepG2. Also shows a potent hemolytic activity (LD(50)=5 ug/ml). The chain is Brevinin-ALb from Amolops loloensis (Lolokou Sucker Frog).